The sequence spans 156 residues: Endoribonuclease YbeY (156 aa).

Positions 122, 126, and 132 each coordinate Zn(2+).

The protein belongs to the endoribonuclease YbeY family. The cofactor is Zn(2+).

It localises to the cytoplasm. Single strand-specific metallo-endoribonuclease involved in late-stage 70S ribosome quality control and in maturation of the 3' terminus of the 16S rRNA. The sequence is that of Endoribonuclease YbeY from Bacillus cytotoxicus (strain DSM 22905 / CIP 110041 / 391-98 / NVH 391-98).